Consider the following 425-residue polypeptide: Serine--tRNA ligase (425 aa).

Residue 229–231 (TAE) participates in L-serine binding. An ATP-binding site is contributed by 260-262 (RSE). E283 lines the L-serine pocket. ATP is bound at residue 347 to 350 (EISS). Position 384 (S384) interacts with L-serine.

The protein belongs to the class-II aminoacyl-tRNA synthetase family. Type-1 seryl-tRNA synthetase subfamily. As to quaternary structure, homodimer. The tRNA molecule binds across the dimer.

It is found in the cytoplasm. It carries out the reaction tRNA(Ser) + L-serine + ATP = L-seryl-tRNA(Ser) + AMP + diphosphate + H(+). It catalyses the reaction tRNA(Sec) + L-serine + ATP = L-seryl-tRNA(Sec) + AMP + diphosphate + H(+). Its pathway is aminoacyl-tRNA biosynthesis; selenocysteinyl-tRNA(Sec) biosynthesis; L-seryl-tRNA(Sec) from L-serine and tRNA(Sec): step 1/1. Catalyzes the attachment of serine to tRNA(Ser). Is also able to aminoacylate tRNA(Sec) with serine, to form the misacylated tRNA L-seryl-tRNA(Sec), which will be further converted into selenocysteinyl-tRNA(Sec). The protein is Serine--tRNA ligase of Rhizorhabdus wittichii (strain DSM 6014 / CCUG 31198 / JCM 15750 / NBRC 105917 / EY 4224 / RW1) (Sphingomonas wittichii).